Consider the following 357-residue polypeptide: MASGGHERANEDYRVSGITGCSKTPQPETQDSLQTSSQSSALCTAPVAAANLGPSLRRNVVSERERRRRISLSCEHLRALLPQFDGRREDMASVLEMSVYFLQLAHSMDPSWEQLSVPQPPQEMWHMWQGDVLQVTLANQIADSKPDSGIAKPSAVSRVQDPPCFGMLDTDQSQATERESELLERPSSCPGHRQSALSFSEPESSSLGPGLPPWIPHSWQPATPEASDIVPGGSHQVASLAGDPESSGMLAEEANLVLASVPDARYTTGAGSDVVDGAPFLMTTNPDWWLGSVEGRGGPALARSSPVDGAEPSFIGDPELCSQELQAGPGELWGLDFGSPGLALKDEADSIFPDFFP.

Residues 1-14 (MASGGHERANEDYR) show a composition bias toward basic and acidic residues. The tract at residues 1–40 (MASGGHERANEDYRVSGITGCSKTPQPETQDSLQTSSQSS) is disordered. The segment covering 19-31 (TGCSKTPQPETQD) has biased composition (polar residues). The bHLH domain maps to 54–105 (PSLRRNVVSERERRRRISLSCEHLRALLPQFDGRREDMASVLEMSVYFLQLA). The disordered stretch occupies residues 145–210 (KPDSGIAKPS…EPESSSLGPG (66 aa)). Residues 200 to 209 (SEPESSSLGP) show a composition bias toward low complexity.

Forms both hetero- and homodimers with SOHLH2. In terms of tissue distribution, in males, it is mainly expressed in testis, while in females it is mainly expressed in ovary. In testis, it is exclusively expressed in spermatogonia, with a preference for prespermatogonia and type A spermatogonia. In ovary, it is detected in germ cell cysts, primordial follicles, and primary follicles but is undetectable by the secondary follicle stage (at protein level). Expressed in the majority of spermatogonia in adult animals, but not in the most undifferentiated spermatogonial population.

It is found in the cytoplasm. The protein localises to the nucleus. Functionally, transcription regulator of both male and female germline differentiation. Suppresses genes involved in spermatogonial stem cells maintenance, and induces genes important for spermatogonial differentiation. Coordinates oocyte differentiation without affecting meiosis I. The protein is Spermatogenesis- and oogenesis-specific basic helix-loop-helix-containing protein 1 (Sohlh1) of Mus musculus (Mouse).